A 493-amino-acid chain; its full sequence is Transcript termination protein A18 (493 aa).

In terms of domain architecture, Helicase ATP-binding spans 100 to 256 (MIELKRPLYI…NSIINIAKLS (157 aa)). 113–120 (LACGFGKT) contributes to the ATP binding site. The DESH box motif lies at 206-209 (DESH). The Helicase C-terminal domain maps to 309–456 (ILDTLVEEFK…IISLSVDKLG (148 aa)).

It belongs to the helicase family. Poxviruses subfamily. Interacts with G2. Might be part of a transcription complex composed at least of G2, A18, and H5.

Its subcellular location is the virion. Functionally, DNA helicase which seems to act as a postreplicative transcription termination factor. Involved in ATP-dependent release of nascent RNA. Forms a stable complex with single-stranded DNA, and to a lesser extent RNA. This chain is Transcript termination protein A18, found in Mus musculus (Mouse).